The sequence spans 206 residues: Testis-expressed protein 38 (206 aa).

The helical transmembrane segment at 15–35 threads the bilayer; sequence VSLYFGILGLCSVITGGCIIF.

It is found in the membrane. The sequence is that of Testis-expressed protein 38 (TEX38) from Homo sapiens (Human).